The sequence spans 647 residues: Nucleoside triphosphatase I (647 aa).

A Helicase ATP-binding domain is found at 48-212 (FIGLKNLNSM…NNLIGLLRPN (165 aa)). 61–68 (WDTGTGKT) lines the ATP pocket. A DEXH box motif is present at residues 150–153 (DEVH). Positions 378-541 (YIEACRIILN…KINVVFDLLK (164 aa)) constitute a Helicase C-terminal domain. The segment at 467 to 533 (DIIILDMPWN…DIIKNKQGKI (67 aa)) is binding to the cap-specific mRNA (nucleoside-2'-O-)-methyltransferase.

It belongs to the helicase family. NPH I subfamily. In terms of assembly, monomer. Interacts (via C-terminus) with RAP94 (via N-terminus). Interacts with the cap-specific mRNA (nucleoside-2'-O-)-methyltransferase.

The protein localises to the virion. The enzyme catalyses a ribonucleoside 5'-triphosphate + H2O = a ribonucleoside 5'-diphosphate + phosphate + H(+). In terms of biological role, DNA-dependent ATPase required for providing the needed energy to achieve the termination of early transcripts. Acts in concert with the RAP94 subunit of the virion RNA polymerase and the capping enzyme/VTF to catalyze release of UUUUUNU-containing nascent RNA from the elongation complex. NPH-I must bind ssDNA in order to exhibit ATPase activity. In Choristoneura fumiferana (Spruce budworm moth), this protein is Nucleoside triphosphatase I (NPH1).